Consider the following 316-residue polypeptide: Pantothenate kinase (316 aa).

Residue 95-102 (GSVAVGKS) coordinates ATP.

It belongs to the prokaryotic pantothenate kinase family.

The protein resides in the cytoplasm. The catalysed reaction is (R)-pantothenate + ATP = (R)-4'-phosphopantothenate + ADP + H(+). It participates in cofactor biosynthesis; coenzyme A biosynthesis; CoA from (R)-pantothenate: step 1/5. The sequence is that of Pantothenate kinase from Cronobacter sakazakii (strain ATCC BAA-894) (Enterobacter sakazakii).